The sequence spans 295 residues: 4-hydroxy-tetrahydrodipicolinate synthase (295 aa).

Position 46 (T46) interacts with pyruvate. The Proton donor/acceptor role is filled by Y134. K162 functions as the Schiff-base intermediate with substrate in the catalytic mechanism. I205 lines the pyruvate pocket.

This sequence belongs to the DapA family. As to quaternary structure, homotetramer; dimer of dimers.

The protein localises to the cytoplasm. The enzyme catalyses L-aspartate 4-semialdehyde + pyruvate = (2S,4S)-4-hydroxy-2,3,4,5-tetrahydrodipicolinate + H2O + H(+). It functions in the pathway amino-acid biosynthesis; L-lysine biosynthesis via DAP pathway; (S)-tetrahydrodipicolinate from L-aspartate: step 3/4. Functionally, catalyzes the condensation of (S)-aspartate-beta-semialdehyde [(S)-ASA] and pyruvate to 4-hydroxy-tetrahydrodipicolinate (HTPA). The protein is 4-hydroxy-tetrahydrodipicolinate synthase of Anaeromyxobacter sp. (strain Fw109-5).